Reading from the N-terminus, the 268-residue chain is 4-diphosphocytidyl-2-C-methyl-D-erythritol kinase (268 aa).

Residue Lys9 is part of the active site. An ATP-binding site is contributed by Pro88–Ser98. Residue Asp130 is part of the active site.

It belongs to the GHMP kinase family. IspE subfamily.

It carries out the reaction 4-CDP-2-C-methyl-D-erythritol + ATP = 4-CDP-2-C-methyl-D-erythritol 2-phosphate + ADP + H(+). It functions in the pathway isoprenoid biosynthesis; isopentenyl diphosphate biosynthesis via DXP pathway; isopentenyl diphosphate from 1-deoxy-D-xylulose 5-phosphate: step 3/6. Catalyzes the phosphorylation of the position 2 hydroxy group of 4-diphosphocytidyl-2C-methyl-D-erythritol. The chain is 4-diphosphocytidyl-2-C-methyl-D-erythritol kinase from Aquifex aeolicus (strain VF5).